We begin with the raw amino-acid sequence, 275 residues long: Large ribosomal subunit protein uL2 (275 aa).

Positions Gly-222–Lys-275 are disordered. The segment covering Asp-229–Asn-239 has biased composition (basic and acidic residues).

This sequence belongs to the universal ribosomal protein uL2 family. As to quaternary structure, part of the 50S ribosomal subunit. Forms a bridge to the 30S subunit in the 70S ribosome.

One of the primary rRNA binding proteins. Required for association of the 30S and 50S subunits to form the 70S ribosome, for tRNA binding and peptide bond formation. It has been suggested to have peptidyltransferase activity; this is somewhat controversial. Makes several contacts with the 16S rRNA in the 70S ribosome. This chain is Large ribosomal subunit protein uL2, found in Psychrobacter cryohalolentis (strain ATCC BAA-1226 / DSM 17306 / VKM B-2378 / K5).